We begin with the raw amino-acid sequence, 236 residues long: UPF0502 protein Bcep1808_3727 (236 aa).

Belongs to the UPF0502 family.

The protein is UPF0502 protein Bcep1808_3727 of Burkholderia vietnamiensis (strain G4 / LMG 22486) (Burkholderia cepacia (strain R1808)).